The primary structure comprises 172 residues: Adrenodoxin-like protein 1, mitochondrial (172 aa).

A 2Fe-2S ferredoxin-type domain is found at 57 to 159 (VNITYVDKDG…GMELELPKAT (103 aa)). [2Fe-2S] cluster contacts are provided by cysteine 94, cysteine 100, cysteine 103, and cysteine 140.

Belongs to the adrenodoxin/putidaredoxin family. It depends on [2Fe-2S] cluster as a cofactor.

The protein localises to the mitochondrion matrix. In terms of biological role, required for ecdysteroidogenesis in the prothoracic gland which is necessary for larval to pupal transition. The polypeptide is Adrenodoxin-like protein 1, mitochondrial (Drosophila melanogaster (Fruit fly)).